The sequence spans 432 residues: Adenylosuccinate synthetase (432 aa).

Residues 13–19 and 41–43 contribute to the GTP site; these read GDEGKGK and GHT. The active-site Proton acceptor is Asp-14. Residues Asp-14 and Gly-41 each coordinate Mg(2+). IMP-binding positions include 14–17, 39–42, Thr-130, Arg-144, Gln-225, Thr-240, and Arg-304; these read DEGK and NAGH. The active-site Proton donor is the His-42. Residue 300 to 306 participates in substrate binding; it reads ATTGRRR. GTP is bound by residues Arg-306, 332–334, and 415–417; these read KLD and STG.

The protein belongs to the adenylosuccinate synthetase family. Homodimer. It depends on Mg(2+) as a cofactor.

The protein localises to the cytoplasm. It carries out the reaction IMP + L-aspartate + GTP = N(6)-(1,2-dicarboxyethyl)-AMP + GDP + phosphate + 2 H(+). The protein operates within purine metabolism; AMP biosynthesis via de novo pathway; AMP from IMP: step 1/2. Plays an important role in the de novo pathway of purine nucleotide biosynthesis. Catalyzes the first committed step in the biosynthesis of AMP from IMP. In Sodalis glossinidius (strain morsitans), this protein is Adenylosuccinate synthetase.